The sequence spans 212 residues: Interleukin-6 (212 aa).

The signal sequence occupies residues 1-29; the sequence is MNSFSTSAFGPVAFSLGLLLVLPAAFPAP. Cys-72 and Cys-78 are joined by a disulfide. Asn-73 is a glycosylation site (N-linked (GlcNAc...) asparagine). Phosphoserine; by FAM20C is present on Ser-81. A disulfide bridge links Cys-101 with Cys-111.

Belongs to the IL-6 superfamily. In terms of assembly, component of a hexamer of two molecules each of IL6, IL6R and IL6ST; first binds to IL6R to associate with the signaling subunit IL6ST. Interacts with IL6R (via the N-terminal ectodomain); this interaction may be affected by IL6R-binding with SORL1, hence decreasing IL6 cis signaling. Interacts with SORL1 (via the N-terminal ectodomain); this interaction leads to IL6 internalization and lysosomal degradation. May form a trimeric complex with the soluble SORL1 ectodomain and soluble IL6R receptor; this interaction might stabilize circulating IL6, hence promoting IL6 trans signaling. N- and O-glycosylated. As to expression, produced by skeletal muscle.

The protein localises to the secreted. In terms of biological role, cytokine with a wide variety of biological functions in immunity, tissue regeneration, and metabolism. Binds to IL6R, then the complex associates to the signaling subunit IL6ST/gp130 to trigger the intracellular IL6-signaling pathway. The interaction with the membrane-bound IL6R and IL6ST stimulates 'classic signaling', whereas the binding of IL6 and soluble IL6R to IL6ST stimulates 'trans-signaling'. Alternatively, 'cluster signaling' occurs when membrane-bound IL6:IL6R complexes on transmitter cells activate IL6ST receptors on neighboring receiver cells. IL6 is a potent inducer of the acute phase response. Rapid production of IL6 contributes to host defense during infection and tissue injury, but excessive IL6 synthesis is involved in disease pathology. In the innate immune response, is synthesized by myeloid cells, such as macrophages and dendritic cells, upon recognition of pathogens through toll-like receptors (TLRs) at the site of infection or tissue injury. In the adaptive immune response, is required for the differentiation of B cells into immunoglobulin-secreting cells. Plays a major role in the differentiation of CD4(+) T cell subsets. Essential factor for the development of T follicular helper (Tfh) cells that are required for the induction of germinal-center formation. Required to drive naive CD4(+) T cells to the Th17 lineage. Also required for proliferation of myeloma cells and the survival of plasmablast cells. Its function is as follows. Acts as an essential factor in bone homeostasis and on vessels directly or indirectly by induction of VEGF, resulting in increased angiogenesis activity and vascular permeability. Induces, through 'trans-signaling' and synergistically with IL1B and TNF, the production of VEGF. Involved in metabolic controls, is discharged into the bloodstream after muscle contraction increasing lipolysis and improving insulin resistance. 'Trans-signaling' in central nervous system also regulates energy and glucose homeostasis. Mediates, through GLP-1, crosstalk between insulin-sensitive tissues, intestinal L cells and pancreatic islets to adapt to changes in insulin demand. Also acts as a myokine. Plays a protective role during liver injury, being required for maintenance of tissue regeneration. Also has a pivotal role in iron metabolism by regulating HAMP/hepcidin expression upon inflammation or bacterial infection. Through activation of IL6ST-YAP-NOTCH pathway, induces inflammation-induced epithelial regeneration. The protein is Interleukin-6 of Homo sapiens (Human).